The primary structure comprises 172 residues: Large ribosomal subunit protein uL10 (172 aa).

Belongs to the universal ribosomal protein uL10 family. In terms of assembly, part of the ribosomal stalk of the 50S ribosomal subunit. The N-terminus interacts with L11 and the large rRNA to form the base of the stalk. The C-terminus forms an elongated spine to which L12 dimers bind in a sequential fashion forming a multimeric L10(L12)X complex.

In terms of biological role, forms part of the ribosomal stalk, playing a central role in the interaction of the ribosome with GTP-bound translation factors. The polypeptide is Large ribosomal subunit protein uL10 (Parvibaculum lavamentivorans (strain DS-1 / DSM 13023 / NCIMB 13966)).